A 113-amino-acid chain; its full sequence is MAAVLEENGCSRQSSPSAGDSDAEPGDTARHKLESLLNRNMRIEMTDGRSLIGCFLCTDRDCNVILGSAQEFLRPSDSFPVREPRVLGLAMVPGHHIVSIQVELESVTSPQYI.

The tract at residues 1-29 (MAAVLEENGCSRQSSPSAGDSDAEPGDTA) is disordered. Residues 28 to 106 (TARHKLESLL…IVSIQVELES (79 aa)) form the Sm domain.

Belongs to the snRNP Sm proteins family. Component of the N-terminal acetyltransferase C (NatC) complex, which is composed of naa35, naa38 and naa30.

The protein localises to the cytoplasm. Auxillary component of the N-terminal acetyltransferase C (NatC) complex which catalyzes acetylation of N-terminal methionine residues. In Xenopus laevis (African clawed frog), this protein is N-alpha-acetyltransferase 38-A, NatC auxiliary subunit (naa38-a).